A 410-amino-acid chain; its full sequence is Adenosylhomocysteinase (410 aa).

Positions 117 and 142 each coordinate substrate. 143–145 (TTT) contributes to the NAD(+) binding site. The substrate site is built by lysine 172 and aspartate 176. NAD(+) is bound by residues asparagine 177, 206 to 211 (GYGYCG), glutamate 229, 285 to 287 (AGH), and asparagine 332.

It belongs to the adenosylhomocysteinase family. NAD(+) is required as a cofactor.

The protein resides in the cytoplasm. The catalysed reaction is S-adenosyl-L-homocysteine + H2O = L-homocysteine + adenosine. The protein operates within amino-acid biosynthesis; L-homocysteine biosynthesis; L-homocysteine from S-adenosyl-L-homocysteine: step 1/1. Functionally, may play a key role in the regulation of the intracellular concentration of adenosylhomocysteine. This chain is Adenosylhomocysteinase, found in Thermoplasma acidophilum (strain ATCC 25905 / DSM 1728 / JCM 9062 / NBRC 15155 / AMRC-C165).